Consider the following 866-residue polypeptide: Autophagy-related protein 9 (866 aa).

At 1-94 the chain is on the cytoplasmic side; sequence MMSSGHKGPN…KGLWCIIVKW (94 aa). A helical membrane pass occupies residues 95–115; sequence AVELLSLGFIICFSGFFLLYV. The Lumenal portion of the chain corresponds to 116–153; that stretch reads DWNGLQNAKCGMDAVESGTKPCDLVKEAIHPHPLSPFT. A helical membrane pass occupies residues 154–174; sequence LTTAIIVGYLALFSVYWLFCF. Topologically, residues 175 to 319 are cytoplasmic; it reads LRFFAQLKDT…VSNPTTLKKR (145 aa). The stretch at 320–340 is an intramembrane region; sequence LFVVGLAMLLLSPFLVIFMLV. The Cytoplasmic portion of the chain corresponds to 341-404; that stretch reads YLFLRHAEQF…LKQFPSPIIS (64 aa). Residues 405-425 form a helical membrane-spanning segment; the sequence is IIAKFVSFVSGGFAAVLIIIA. Over 426-433 the chain is Lumenal; that stretch reads FLEESLLE. The chain crosses the membrane as a helical span at residues 434 to 454; the sequence is GHIFGRNLFWYAAVFGTITAI. Over 455-507 the chain is Cytoplasmic; the sequence is SRAAISDELLVLDPVGTMSLVVQNTHYMPKRWRGKENKDDVRLELETLFQYTG. An intramembrane segment occupies 508–528; the sequence is MMLLEEIASIFITPFLLMFVV. The Cytoplasmic segment spans residues 529–866; it reads PKRVDDILQF…ETSTSSTTLR (338 aa). Residues 744-781 form a disordered region; sequence QPEGEDSYGSQHPLDGRNQWWGRGNHSQISTAHPATTN. Residues 768-781 are compositionally biased toward polar residues; that stretch reads NHSQISTAHPATTN.

Belongs to the ATG9 family. Homotrimer; forms a homotrimer with a central pore that forms a path between the two membrane leaflets. In terms of tissue distribution, expressed in roots, leaves, stems and flowers.

Its subcellular location is the preautophagosomal structure membrane. In terms of biological role, phospholipid scramblase involved in autophagy by mediating autophagosomal membrane expansion. Cycles between the preautophagosomal structure/phagophore assembly site (PAS) and the cytoplasmic vesicle pool and supplies membrane for the growing autophagosome. Lipid scramblase activity plays a key role in preautophagosomal structure/phagophore assembly by distributing the phospholipids that arrive through ATG2 from the cytoplasmic to the luminal leaflet of the bilayer, thereby driving autophagosomal membrane expansion. In addition to autophagy, also plays a role in necrotic cell death. Plays an essential role in plant nutrient recycling. The sequence is that of Autophagy-related protein 9 from Arabidopsis thaliana (Mouse-ear cress).